The primary structure comprises 241 residues: tRNA (guanine-N(7)-)-methyltransferase (241 aa).

6 residues coordinate S-adenosyl-L-methionine: glycine 61, glutamate 84, arginine 86, asparagine 117, alanine 118, and leucine 137. Aspartate 140 is an active-site residue. The tract at residues 141-149 (PHFKKTKHK) is alphaC helix. Positions 215 and 217 each coordinate S-adenosyl-L-methionine. An alpha6 helix region spans residues 215–223 (TEEGKKVQR).

The protein belongs to the class I-like SAM-binding methyltransferase superfamily. TrmB family. Catalytic component of the METTL1-WDR4 complex, composed of mettl1 and wdr4.

It localises to the nucleus. The enzyme catalyses guanosine(46) in tRNA + S-adenosyl-L-methionine = N(7)-methylguanosine(46) in tRNA + S-adenosyl-L-homocysteine. It catalyses the reaction a guanosine in mRNA + S-adenosyl-L-methionine = an N(7)-methylguanosine in mRNA + S-adenosyl-L-homocysteine. The catalysed reaction is a guanosine in miRNA + S-adenosyl-L-methionine = an N(7)-methylguanosine in miRNA + S-adenosyl-L-homocysteine. Its pathway is tRNA modification; N(7)-methylguanine-tRNA biosynthesis. In terms of biological role, catalytic component of METTL1-WDR4 methyltransferase complex that mediates the formation of N(7)-methylguanine in a subset of RNA species, such as tRNAs, mRNAs and microRNAs (miRNAs). Catalyzes the formation of N(7)-methylguanine at position 46 (m7G46) in a large subset of tRNAs that contain the 5'-RAGGU-3' motif within the variable loop. M7G46 interacts with C13-G22 in the D-loop to stabilize tRNA tertiary structure and protect tRNAs from decay. Also acts as a methyltransferase for a subset of internal N(7)-methylguanine in mRNAs. Internal N(7)-methylguanine methylation of mRNAs in response to stress promotes their relocalization to stress granules, thereby suppressing their translation. Also methylates a specific subset of miRNAs. The protein is tRNA (guanine-N(7)-)-methyltransferase (mettl1) of Danio rerio (Zebrafish).